A 563-amino-acid polypeptide reads, in one-letter code: 4-hydroxy-7-methoxy-3-oxo-3,4-dihydro-2H-1,4-benzoxazin-2-yl glucoside beta-D-glucosidase 2, chloroplastic (563 aa).

The transit peptide at 1 to 51 (MAPLLAAAMNHAAHPVLRSHLGPNNESFSRHHLSSSPQSSKRRFNLSFTPR) directs the protein to the chloroplast. Positions 17–43 (LRSHLGPNNESFSRHHLSSSPQSSKRR) are disordered. A beta-D-glucoside contacts are provided by residues glutamine 89, histidine 193, and 241–242 (NE). Glutamate 242 acts as the Proton donor in catalysis. An intrachain disulfide couples cysteine 261 to cysteine 267. The segment at 322–358 (SFLDEQAKERSMDINLGWFLEPVVRGDYPFSMRSLAR) is dimerization. Tyrosine 384 is a binding site for a beta-D-glucoside. Dimerization regions lie at residues 391–402 (HIDISPKYSPVL) and 447–450 (KYGN). A beta-D-glucoside contacts are provided by residues glutamate 457, tryptophan 508, 515-516 (EW), and tyrosine 524. Glutamate 457 functions as the Nucleophile in the catalytic mechanism.

This sequence belongs to the glycosyl hydrolase 1 family. As to quaternary structure, homo- and heterodimer. Expressed in leaves only starting at day 6 after germination.

The protein localises to the plastid. It localises to the chloroplast. The enzyme catalyses Hydrolysis of terminal, non-reducing beta-D-glucosyl residues with release of beta-D-glucose.. It carries out the reaction DIMBOA beta-D-glucoside + H2O = DIMBOA + D-glucose. It catalyses the reaction DIBOA beta-D-glucoside + H2O = DIBOA + D-glucose. Beta-glucosidase acting poorly on artificial aryl beta-glucosides. Has no activity toward the chromogenic substrate 6-bromo-2-naphthyl-beta-D-glucoside (6BNGlc). The sequence is that of 4-hydroxy-7-methoxy-3-oxo-3,4-dihydro-2H-1,4-benzoxazin-2-yl glucoside beta-D-glucosidase 2, chloroplastic (GLU2) from Zea mays (Maize).